Consider the following 265-residue polypeptide: Gamma-secretase subunit APH-1A (265 aa).

Topologically, residues 1–2 (MG) are lumenal. Residues 3-23 (AAVFFGCTFVAFGPAFALFLI) form a helical membrane-spanning segment. At 24 to 31 (TVAGDPLR) the chain is on the cytoplasmic side. A helical membrane pass occupies residues 32–52 (VIILVAGAFFWLVSLLLASVV). Topologically, residues 53-68 (WFILVHVTDRSDARLQ) are lumenal. The chain crosses the membrane as a helical span at residues 69 to 89 (YGLLIFGAAVSVLLQEVFRFA). Residues 90-118 (YYKLLKKADEGLASLSEDGRSPISIRQMA) lie on the Cytoplasmic side of the membrane. A helical membrane pass occupies residues 119-139 (YVSGLSFGIISGVFSVINILA). Topologically, residues 140–158 (DALGPGVVGIHGDSPYYFL) are lumenal. The chain crosses the membrane as a helical span at residues 159–179 (TSAFLTAAIILLHTFWGVVFF). Over 180-186 (DACERRR) the chain is Cytoplasmic. Residues 187-207 (YWALGLVVGSHLLTSGLTFLN) form a helical membrane-spanning segment. Topologically, residues 208 to 213 (PWYEAS) are lumenal. Residues 214–234 (LLPIYAVTVSMGLWAFITAGG) traverse the membrane as a helical segment. At 235–265 (SLRSIQRSLLCRRQEDSRVMVYSALRIPPED) the chain is on the cytoplasmic side.

It belongs to the APH-1 family. As to quaternary structure, the functional gamma-secretase complex is composed of at least four polypeptides: a presenilin homodimer (PSEN1 or PSEN2), nicastrin (NCSTN), APH1 (APH1A or APH1B) and PSENEN/PEN2. Widely expressed. Expressed in leukocytes, lung, placenta, small intestine, liver, kidney, spleen thymus, skeletal muscle, heart and brain. Isoform 1 and isoform 2 are nearly expressed at the same level.

It localises to the endoplasmic reticulum membrane. Its subcellular location is the golgi apparatus. It is found in the golgi stack membrane. Its function is as follows. Non-catalytic subunit of the gamma-secretase complex, an endoprotease complex that catalyzes the intramembrane cleavage of integral membrane proteins such as Notch receptors and APP (amyloid-beta precursor protein). Required for normal gamma-secretase assembly. The gamma-secretase complex plays a role in Notch and Wnt signaling cascades and regulation of downstream processes via its role in processing key regulatory proteins, and by regulating cytosolic CTNNB1 levels. The sequence is that of Gamma-secretase subunit APH-1A (APH1A) from Homo sapiens (Human).